The chain runs to 419 residues: G-protein coupled receptor 151 (419 aa).

Residues 1-41 (MLAAAFADSNSSSMNVSFAHLHFAGGYLPSDSQDWRTIIPA) are Extracellular-facing. 2 N-linked (GlcNAc...) asparagine glycosylation sites follow: Asn-10 and Asn-15. The helical transmembrane segment at 42–62 (LLVAVCLVGFVGNLCVIGILL) threads the bilayer. At 63-71 (HNAWKGKPS) the chain is on the cytoplasmic side. Residues 72–92 (MIHSLILNLSLADLSLLLFSA) traverse the membrane as a helical segment. Topologically, residues 93–116 (PIRATAYSKSVWDLGWFVCKSSDW) are extracellular. A disulfide bridge links Cys-111 with Cys-187. A helical transmembrane segment spans residues 117 to 137 (FIHTCMAAKSLTIVVVAKVCF). The Cytoplasmic segment spans residues 138-153 (MYASDPAKQVSIHNYT). Residues 154-174 (IWSVLVAIWTVASLLPLPEWF) form a helical membrane-spanning segment. At 175-201 (FSTIRHHEGVEMCLVDVPAVAEEFMSM) the chain is on the extracellular side. Residues 202–222 (FGKLYPLLAFGLPLFFASFYF) form a helical membrane-spanning segment. Residues 223–252 (WRAYDQCKKRGTKTQNLRNQIRSKQVTVML) are Cytoplasmic-facing. A helical membrane pass occupies residues 253-273 (LSIAIISALLWLPEWVAWLWV). Topologically, residues 274–286 (WHLKAAGPAPPQG) are extracellular. A helical membrane pass occupies residues 287 to 307 (FIALSQVLMFSISSANPLIFL). The Cytoplasmic segment spans residues 308–419 (VMSEEFREGL…EDQETGEGVK (112 aa)). Residues 330 to 419 (PTVSESQETP…EDQETGEGVK (90 aa)) form a disordered region. Residues 332-341 (VSESQETPAG) are compositionally biased toward polar residues. Acidic residues predominate over residues 410 to 419 (EDQETGEGVK).

Belongs to the G-protein coupled receptor 1 family. In terms of tissue distribution, high expression in the spinal cord.

It localises to the cell membrane. Functionally, proton-sensing G-protein coupled receptor. In Homo sapiens (Human), this protein is G-protein coupled receptor 151 (GPR151).